Here is a 343-residue protein sequence, read N- to C-terminus: Signal peptide peptidase 1 (343 aa).

The Lumenal portion of the chain corresponds to M1–P19. A helical transmembrane segment spans residues L20 to V40. At G41–R62 the chain is on the cytoplasmic side. The chain crosses the membrane as a helical span at residues F63 to K83. At D84–N87 the chain is on the lumenal side. Residues A88–P108 form a helical membrane-spanning segment. Residues S109–E136 are Cytoplasmic-facing. The helical transmembrane segment at F137–A157 threads the bilayer. At K158–H160 the chain is on the lumenal side. A helical transmembrane segment spans residues W161–L181. Over G182 to A188 the chain is Cytoplasmic. The helical transmembrane segment at I189–V209 threads the bilayer. D198 is an active-site residue. Residues S210–R230 are Lumenal-facing. A helical transmembrane segment spans residues P231–L251. The active site involves D239. Over R252–S266 the chain is Cytoplasmic. Residues A267 to A287 form a helical membrane-spanning segment. The Lumenal segment spans residues A288–P290. The PAL motif lies at P290–L292. The chain crosses the membrane as a helical span at residues A291–G311. Over E312–E343 the chain is Cytoplasmic. The disordered stretch occupies residues S322–E343. A compositionally biased stretch (acidic residues) spans A324 to T334. Residues K340 to E343 carry the Endoplasmic reticulum targeting signal motif.

This sequence belongs to the peptidase A22B family. In terms of tissue distribution, ubiquitous.

Its subcellular location is the endoplasmic reticulum membrane. Its function is as follows. Intramembrane-cleaving aspartic protease (I-CLiP) that cleaves type II membrane signal peptides in the hydrophobic plane of the membrane. Catalyzes intramembrane proteolysis of some signal peptides after they have been cleaved from a preprotein, resulting in the release of the fragment from the ER membrane into the cytoplasm. This chain is Signal peptide peptidase 1 (SPP1), found in Oryza sativa subsp. japonica (Rice).